Consider the following 649-residue polypeptide: Putative cystathionine gamma-synthase YML082W (649 aa).

A disordered region spans residues 242–273 (NEANHGEDHDGGISGEVDSQEEPHNGLVSTIP). Phosphoserine is present on S287. Residue K451 is modified to N6-(pyridoxal phosphate)lysine.

The protein belongs to the trans-sulfuration enzymes family. MET7 subfamily. Pyridoxal 5'-phosphate serves as cofactor.

The catalysed reaction is O-succinyl-L-homoserine + L-cysteine = L,L-cystathionine + succinate + H(+). It participates in amino-acid biosynthesis; L-methionine biosynthesis via de novo pathway; L-cystathionine from O-succinyl-L-homoserine: step 1/1. In terms of biological role, catalyzes the formation of L-cystathionine from O-succinyl-L-homoserine (OSHS) and L-cysteine, via a gamma-replacement reaction. In the absence of thiol, catalyzes gamma-elimination to form 2-oxobutanoate, succinate and ammonia. The polypeptide is Putative cystathionine gamma-synthase YML082W (Saccharomyces cerevisiae (strain ATCC 204508 / S288c) (Baker's yeast)).